The following is a 506-amino-acid chain: Thyroid hormone receptor alpha (506 aa).

The segment at 1-32 is disordered; sequence MEQKPSKVECGSDPEENSARSPDGKRKRKNGQ. Positions 1-52 are modulating; the sequence is MEQKPSKVECGSDPEENSARSPDGKRKRKNGQCSLKTSMSGYIPSYLDKDEQ. The Zn(2+) site is built by cysteine 53, cysteine 56, cysteine 70, cysteine 73, cysteine 91, cysteine 97, cysteine 107, and cysteine 110. 2 NR C4-type zinc fingers span residues 53–73 and 91–115; these read CVVC…CEGC and CKYD…FKKC. The nuclear receptor DNA-binding region spans 53 to 127; sequence CVVCGDKATG…VGMAMDLVLD (75 aa). The NR LBD domain occupies 163–407; the sequence is EEWDLIHVAT…EGQQLLGMHV (245 aa). 3,3',5-triiodo-L-thyronine is bound by residues arginine 228 and serine 277. The segment at 460–506 is disordered; that stretch reads GEDDSSEAGSLTSSDEDPEVCEDAAQATQPLPEAPPRADGEGGGGGS.

It belongs to the nuclear hormone receptor family. NR1 subfamily. As to quaternary structure, binds DNA as a dimer; homodimer and heterodimer with RXRB. Interacts with NCOA3 and NCOA6 coactivators, leading to a strong increase of transcription of target genes. Probably interacts with SFPQ. Interacts with C1D. Interacts with AKAP13. Interacts with TP53INP2. Interacts with PER2. Interacts with PER2. Isoform alpha-2 and isoform alpha-1 interact with TACC1, but the interaction with alpha-1 is weaker. The interaction with isoform alpha-1, but not alpha-2, is decreased in the presence of thyroid hormone T3.

The protein localises to the nucleus. The protein resides in the cytoplasm. Nuclear hormone receptor that can act as a repressor or activator of transcription. High affinity receptor for thyroid hormones, including triiodothyronine and thyroxine. This chain is Thyroid hormone receptor alpha (THRA), found in Sus scrofa (Pig).